The chain runs to 104 residues: Replication restart protein PriB (104 aa).

One can recognise an SSB domain in the interval 2 to 101 (TNRLVLSGTV…LHAEQIELID (100 aa)). The cysteines at positions 48 and 80 are disulfide-linked. The L45 loop signature appears at 82 to 89 (KAKNGLSK).

This sequence belongs to the PriB family. In terms of assembly, homodimer. Primosome assembly occurs via a 'hand-off' mechanism. PriA binds to replication forks, subsequently PriB then DnaT bind; DnaT then displaces ssDNA to generate the helicase loading substrate, which allows DnaC to load helicase DnaB onto the fork. ssDNA is displaced from the PriB-ssDNA complex by DnaT. In a PriA-PriB-replication fork structure, movement of the PriA CRR domain exposes a surface to which PriB binds and contacts ssDNA emerging from the PriA pore. Binds PriA; binding is improved in the presence of ssDNA. Weakly binds DnaT; binding is improved in the presence of ssDNA; as DnaT levels increase PriB dissociates from ssDNA. Component of the replication restart primosome, which is composed of PriA, PriB, PriC, DnaB and DnaT; DnaG primase associates transiently with this complex. Component of the preprimosomal complex composed of one monomer of PriC and DnaT, two monomers of PriA, two dimers of PriB and one hexamer of DnaB. In terms of processing, an intersubunit disulfide bond is seen in some crystals.

Involved in the restart of stalled replication forks, which reloads the replicative helicase (DnaB) on sites other than the origin of replication; the PriA-PriB pathway is the major replication restart pathway. There are several restart pathways, the PriA-PriB pathway is subdivided into 2 distinct pathways. priB and priC have redundant roles in the cell. During primosome assembly it facilitates complex formation between PriA and DnaT on DNA; stabilizes PriA on DNA, presumably by preventing or inhibiting PriA DNA translocation activity. Forms a branched DNA-PriA-PriB complex when the lagging strand is single-stranded (ss)DNA. Binds ssDNA in the presence and absence of ssDNA DNA-binding protein (SSB), does not bind branched structures. DNA binding, forming spiral filaments on ssDNA, is cooperative. Stimulates the helicase activity of PriA. The homodimer binds 12 nucleotides of ssDNA. Binds homo-pyrimidine tracts better than homo-purine tracts. In terms of biological role, genetic interactions among priB, dam, lexA, nagC, polA, rdgB, rdgB, rep and uup link the PriA-PriB replication restart pathway to DNA double-strand break repair. This is Replication restart protein PriB from Escherichia coli (strain K12).